The chain runs to 201 residues: Small ribosomal subunit protein uS4c (201 aa).

Residues 17-44 are disordered; it reads ALPGLTNKKPRTGSDLRNQSRSGKKSQY. The region spanning 89-149 is the S4 RNA-binding domain; that stretch reads MRLDNILFRL…DEQKSRALIQ (61 aa).

The protein belongs to the universal ribosomal protein uS4 family. In terms of assembly, part of the 30S ribosomal subunit. Contacts protein S5. The interaction surface between S4 and S5 is involved in control of translational fidelity.

The protein localises to the plastid. Its subcellular location is the chloroplast. One of the primary rRNA binding proteins, it binds directly to 16S rRNA where it nucleates assembly of the body of the 30S subunit. Its function is as follows. With S5 and S12 plays an important role in translational accuracy. This is Small ribosomal subunit protein uS4c (rps4) from Solanum bulbocastanum (Wild potato).